Consider the following 412-residue polypeptide: Allantoate amidohydrolase (412 aa).

Zn(2+) contacts are provided by histidine 84, aspartate 95, glutamate 130, and histidine 193. Residues arginine 218, asparagine 278, and arginine 291 each coordinate allantoate. Histidine 385 serves as a coordination point for Zn(2+).

It belongs to the peptidase M20 family. In terms of assembly, homodimer. Requires Zn(2+) as cofactor.

The protein resides in the cytoplasm. It catalyses the reaction allantoate + H2O + 2 H(+) = (S)-2-ureidoglycine + NH4(+) + CO2. It participates in nitrogen metabolism; (S)-allantoin degradation. In terms of biological role, involved in the anaerobic nitrogen utilization via the assimilation of allantoin. Catalyzes specifically the hydrolysis of allantoate to yield CO2, NH3 and S-ureidoglycine, which is unstable and readily undergoes a second deamination by S-ureidoglycine aminohydrolase AllE to yield S-ureidoglycolate and NH3. This is Allantoate amidohydrolase from Bacillus subtilis (strain 168).